A 160-amino-acid polypeptide reads, in one-letter code: Transcription elongation factor GreA (160 aa).

Positions 49-75 form a coiled coil; sequence SEYDEAKNDQAFTEGKILQLENKLKNA.

Belongs to the GreA/GreB family.

In terms of biological role, necessary for efficient RNA polymerase transcription elongation past template-encoded arresting sites. The arresting sites in DNA have the property of trapping a certain fraction of elongating RNA polymerases that pass through, resulting in locked ternary complexes. Cleavage of the nascent transcript by cleavage factors such as GreA or GreB allows the resumption of elongation from the new 3'terminus. GreA releases sequences of 2 to 3 nucleotides. In Clostridium botulinum (strain Eklund 17B / Type B), this protein is Transcription elongation factor GreA.